The primary structure comprises 144 residues: MRLNTLSPAPGRVSAKKRVGRGIGSGLGKTAGRGHKGLKSRSGGSVKPGFEGGQMPLQKRLPKFGFTSRISRVTAEVRLAELNKVEADIIDIEALRAADLIDNNIKRAKVFLSGELTKAVTIKGLMVTKGAKAAIEAAGGKIEE.

The tract at residues 1-54 (MRLNTLSPAPGRVSAKKRVGRGIGSGLGKTAGRGHKGLKSRSGGSVKPGFEGGQ) is disordered. Residues 21 to 31 (RGIGSGLGKTA) show a composition bias toward gly residues.

It belongs to the universal ribosomal protein uL15 family. In terms of assembly, part of the 50S ribosomal subunit.

Its function is as follows. Binds to the 23S rRNA. This chain is Large ribosomal subunit protein uL15, found in Saccharophagus degradans (strain 2-40 / ATCC 43961 / DSM 17024).